The following is a 350-amino-acid chain: Probable dual-specificity RNA methyltransferase RlmN (350 aa).

Glutamate 93 serves as the catalytic Proton acceptor. A Radical SAM core domain is found at 99–327; the sequence is SSKRLTVCVS…VSVRYSRGVQ (229 aa). Cysteines 106 and 332 form a disulfide. Residues cysteine 113, cysteine 117, and cysteine 120 each contribute to the [4Fe-4S] cluster site. S-adenosyl-L-methionine is bound by residues 160 to 161, serine 190, 213 to 215, and asparagine 289; these read GE and SLH. Cysteine 332 acts as the S-methylcysteine intermediate in catalysis.

It belongs to the radical SAM superfamily. RlmN family. Requires [4Fe-4S] cluster as cofactor.

The protein resides in the cytoplasm. The catalysed reaction is adenosine(2503) in 23S rRNA + 2 reduced [2Fe-2S]-[ferredoxin] + 2 S-adenosyl-L-methionine = 2-methyladenosine(2503) in 23S rRNA + 5'-deoxyadenosine + L-methionine + 2 oxidized [2Fe-2S]-[ferredoxin] + S-adenosyl-L-homocysteine. The enzyme catalyses adenosine(37) in tRNA + 2 reduced [2Fe-2S]-[ferredoxin] + 2 S-adenosyl-L-methionine = 2-methyladenosine(37) in tRNA + 5'-deoxyadenosine + L-methionine + 2 oxidized [2Fe-2S]-[ferredoxin] + S-adenosyl-L-homocysteine. Specifically methylates position 2 of adenine 2503 in 23S rRNA and position 2 of adenine 37 in tRNAs. The protein is Probable dual-specificity RNA methyltransferase RlmN of Synechocystis sp. (strain ATCC 27184 / PCC 6803 / Kazusa).